A 488-amino-acid chain; its full sequence is Acetyl-coenzyme A carboxylase carboxyl transferase subunit beta, chloroplastic (488 aa).

Positions 227 to 488 constitute a CoA carboxyltransferase N-terminal domain; the sequence is LWIQCDNCYG…LHAFFPLNTN (262 aa). The Zn(2+) site is built by Cys-231, Cys-234, Cys-247, and Cys-250. A C4-type zinc finger spans residues 231–250; it reads CDNCYGLMYKKVKMNVCEQC.

This sequence belongs to the AccD/PCCB family. Acetyl-CoA carboxylase is a heterohexamer composed of biotin carboxyl carrier protein, biotin carboxylase and 2 subunits each of ACCase subunit alpha and ACCase plastid-coded subunit beta (accD). Zn(2+) serves as cofactor. Accumulates in fatty acids synthesizing tissues such as embryos, expanding leaves, flower buds, flowers, and developing siliques.

It localises to the plastid. Its subcellular location is the chloroplast membrane. The protein localises to the chloroplast stroma. It carries out the reaction N(6)-carboxybiotinyl-L-lysyl-[protein] + acetyl-CoA = N(6)-biotinyl-L-lysyl-[protein] + malonyl-CoA. Its pathway is lipid metabolism; malonyl-CoA biosynthesis; malonyl-CoA from acetyl-CoA: step 1/1. In terms of biological role, component of the acetyl coenzyme A carboxylase (ACC) complex. Biotin carboxylase (BC) catalyzes the carboxylation of biotin on its carrier protein (BCCP) and then the CO(2) group is transferred by the transcarboxylase to acetyl-CoA to form malonyl-CoA. This is Acetyl-coenzyme A carboxylase carboxyl transferase subunit beta, chloroplastic from Arabidopsis thaliana (Mouse-ear cress).